The chain runs to 451 residues: MQSIEDIWQETLQIVKKNMSKPSYDTWMKSTTAHSLEGNTFIISAPNNFVRDWLEKSYTQFIANILQEITGRLFDVRFIDGEQEENFEYTVIKPNPALDEDGIEIGKHMLNPRYVFDTFVIGSGNRFAHAASLAVAEAPAKAYNPLFIYGGVGLGKTHLMHAVGHYVQQHKDNAKVMYLSSEKFTNEFISSIRDNKTEEFRTKYRNVDVLLIDDIQFLAGKEGTQEEFFHTFNTLYDEQKQIIISSDRPPKEIPTLEDRLRSRFEWGLITDITPPDLETRIAILRKKAKADGLDIPNEVMLYIANQIDSNIRELEGALIRVVAYSSLVNKDITAGLAAEALKDIIPSSKSQVITISGIQEAVGEYFHVRLEDFKAKKRTKSIAFPRQIAMYLSRELTDASLPKIGDEFGGRDHTTVIHAHEKISQLLKTDQVLKNDLAEIEKNLRKAQNMF.

A domain I, interacts with DnaA modulators region spans residues 1–72 (MQSIEDIWQE…ANILQEITGR (72 aa)). Residues 72-108 (RLFDVRFIDGEQEENFEYTVIKPNPALDEDGIEIGKH) are domain II. Residues 109 to 325 (MLNPRYVFDT…GALIRVVAYS (217 aa)) form a domain III, AAA+ region region. ATP contacts are provided by G153, G155, K156, and T157. Residues 326-451 (SLVNKDITAG…KNLRKAQNMF (126 aa)) are domain IV, binds dsDNA.

It belongs to the DnaA family. In terms of assembly, oligomerizes as a right-handed, spiral filament on DNA at oriC.

It is found in the cytoplasm. Plays an essential role in the initiation and regulation of chromosomal replication. ATP-DnaA binds to the origin of replication (oriC) to initiate formation of the DNA replication initiation complex once per cell cycle. Binds the DnaA box (a 9 base pair repeat at the origin) and separates the double-stranded (ds)DNA. Forms a right-handed helical filament on oriC DNA; dsDNA binds to the exterior of the filament while single-stranded (ss)DNA is stabiized in the filament's interior. The ATP-DnaA-oriC complex binds and stabilizes one strand of the AT-rich DNA unwinding element (DUE), permitting loading of DNA polymerase. After initiation quickly degrades to an ADP-DnaA complex that is not apt for DNA replication. Binds acidic phospholipids. This chain is Chromosomal replication initiator protein DnaA, found in Listeria monocytogenes serotype 4b (strain F2365).